Here is a 341-residue protein sequence, read N- to C-terminus: 33 kDa chaperonin (341 aa).

2 disulfide bridges follow: Cys245/Cys247 and Cys278/Cys281.

The protein belongs to the HSP33 family. Post-translationally, under oxidizing conditions two disulfide bonds are formed involving the reactive cysteines. Under reducing conditions zinc is bound to the reactive cysteines and the protein is inactive.

It is found in the cytoplasm. Redox regulated molecular chaperone. Protects both thermally unfolding and oxidatively damaged proteins from irreversible aggregation. Plays an important role in the bacterial defense system toward oxidative stress. The sequence is that of 33 kDa chaperonin from Thermus thermophilus (strain ATCC BAA-163 / DSM 7039 / HB27).